Here is a 485-residue protein sequence, read N- to C-terminus: MAKLLQRVEITLRSFYIFNSTFGQVEGEEHKKVLFYHPNDIELNTKIKDVGLSEAIIRFTGTFTSEDDCQALHTQKTTQLFYQPEPGYWLVLVLNVPKEVRLKEGVEVADYRGAEISDRIYRAILRQCYQMFRFQNGCFSSCGSEEPNPDKRRELLCQKLLQFYDQHLTNLRDPAQCDIIDMLHSIQYLPLDKTLFLRAQNFGTLCETFPDIKESIMLYQEQVLCGGKLSPEDLHCVHSYVVQHVLKVEASSSTIAVSPSLKRSISECQVGGFVRSRQKVAGDEHDAVNEEDHPMKVYVTLDKEAKPYYLLIYRALHITLCLFLNADQVAPKQDLYDDLHAYMAPQLTSLARDISSELTKEAVGAAGQDNSSGNSETAPKYLFINEQSLQHHTNFQRHLPQGLPRNVLSIIADLANGSGKAEMESAPAEEVQVKTTNDYWIVKRRCNYRQYYVILCNSKATLLDVTQEARRIFEQELTDDVFFDK.

This sequence belongs to the CCZ1 family. As to quaternary structure, component of the Mon1-Ccz1 guanyl-nucleotide exchange factor complex made up of Mon1, Ccz1 and Bulli; the interaction of Bulli with the Mon1-Ccz1 heterodimer is mediated via the C-terminal Mic1 domain of Bulli. Mon1 and Ccz1 form a stable complex which displays Rab7 GEF activity with or without Bulli; GEF activity is enhanced by Bulli possibly by improving membrane association of the complex. Interacts with Rab5 and Rab7; preferentially binds GTP-bound Rab5 and GDP-bound Rab7.

It localises to the cytoplasm. The protein resides in the cytosol. Its activity is regulated as follows. The Rab7 guanyl-nucleotide exchange factor (GEF) activity of the Mon1-Ccz1 complex is autoinhibited by the N-terminal disordered region of Mon1. GEF activity is stimulated by Rab5-mediated recruitment to membranes. In terms of biological role, part of the Mon1-Ccz1 guanyl-nucleotide exchange factor complex specific for Rab7 that promotes the exchange of GDP to GTP, converting Rab7 from an inactive GDP-bound form into an active GTP-bound form. Required for recruitment of Rab7 to endosomal and autophagosomal membranes to mediate endolysosomal and autolysosomal vesicle maturation. Required for fusion of multivesicular bodies and lysosomes but not their formation or trafficking. Involved in the replacement of Rab5 (and possibly Rab4) with Rab7, also known as Rab conversion or the Rab cascade, during endosomal maturation. The Mon1-Ccz1 complex is recruited to phosphatidylinositol 3-phosphate (PtdIns[3]P) enriched membranes by Rab5, which stimulates recruitment and guanyl-nucleotide exchange of Rab7. Together with Rab7 required for autolysosome formation in fat cells and autophagic degradation during starvation-induced basal and developmental autophagy. The sequence is that of Vacuolar fusion protein CCZ1 homolog from Drosophila melanogaster (Fruit fly).